Here is a 464-residue protein sequence, read N- to C-terminus: Argininosuccinate lyase (464 aa).

The protein belongs to the lyase 1 family. Argininosuccinate lyase subfamily.

It is found in the cytoplasm. The catalysed reaction is 2-(N(omega)-L-arginino)succinate = fumarate + L-arginine. Its pathway is amino-acid biosynthesis; L-arginine biosynthesis; L-arginine from L-ornithine and carbamoyl phosphate: step 3/3. The polypeptide is Argininosuccinate lyase (Koribacter versatilis (strain Ellin345)).